The following is a 115-amino-acid chain: uncharacterized protein (115 aa).

This is an uncharacterized protein from Gallus gallus (Chicken).